The following is a 164-amino-acid chain: Phosphopantetheine adenylyltransferase (164 aa).

Ser-10 lines the substrate pocket. Residues 10-11 (SF) and His-18 contribute to the ATP site. Residues Lys-42, Leu-74, and Arg-88 each contribute to the substrate site. ATP-binding positions include 89–91 (GLR), Glu-99, and 124–130 (YAFLSSS).

This sequence belongs to the bacterial CoaD family. Homohexamer. Mg(2+) serves as cofactor.

It is found in the cytoplasm. It carries out the reaction (R)-4'-phosphopantetheine + ATP + H(+) = 3'-dephospho-CoA + diphosphate. It functions in the pathway cofactor biosynthesis; coenzyme A biosynthesis; CoA from (R)-pantothenate: step 4/5. Functionally, reversibly transfers an adenylyl group from ATP to 4'-phosphopantetheine, yielding dephospho-CoA (dPCoA) and pyrophosphate. The polypeptide is Phosphopantetheine adenylyltransferase (Geobacillus thermodenitrificans (strain NG80-2)).